The sequence spans 309 residues: Nucleotide-binding protein cgR_1639 (309 aa).

ATP is bound at residue 32-39; that stretch reads GMSGAGLS. A GTP-binding site is contributed by 83–86; the sequence is DVRS.

Belongs to the RapZ-like family.

In terms of biological role, displays ATPase and GTPase activities. The protein is Nucleotide-binding protein cgR_1639 of Corynebacterium glutamicum (strain R).